The following is a 214-amino-acid chain: 3,4-dihydroxy-2-butanone 4-phosphate synthase (214 aa).

D-ribulose 5-phosphate is bound by residues 37–38 (RE), Asp42, 150–154 (RRGHT), and Glu174. Mg(2+) is bound at residue Glu38. Residue His153 participates in Mg(2+) binding.

Belongs to the DHBP synthase family. In terms of assembly, homodimer. Mg(2+) is required as a cofactor. Mn(2+) serves as cofactor.

The catalysed reaction is D-ribulose 5-phosphate = (2S)-2-hydroxy-3-oxobutyl phosphate + formate + H(+). It participates in cofactor biosynthesis; riboflavin biosynthesis; 2-hydroxy-3-oxobutyl phosphate from D-ribulose 5-phosphate: step 1/1. In terms of biological role, catalyzes the conversion of D-ribulose 5-phosphate to formate and 3,4-dihydroxy-2-butanone 4-phosphate. This Pasteurella multocida (strain Pm70) protein is 3,4-dihydroxy-2-butanone 4-phosphate synthase.